The chain runs to 215 residues: Large ribosomal subunit protein uL3 (215 aa).

Q156 is modified (N5-methylglutamine).

It belongs to the universal ribosomal protein uL3 family. Part of the 50S ribosomal subunit. Forms a cluster with proteins L14 and L19. In terms of processing, methylated by PrmB.

One of the primary rRNA binding proteins, it binds directly near the 3'-end of the 23S rRNA, where it nucleates assembly of the 50S subunit. This chain is Large ribosomal subunit protein uL3, found in Xylella fastidiosa (strain M12).